A 315-amino-acid chain; its full sequence is Homoserine kinase (315 aa).

Residue 97 to 107 (PPARGLGSSAT) coordinates ATP.

It belongs to the GHMP kinase family. Homoserine kinase subfamily.

It localises to the cytoplasm. It carries out the reaction L-homoserine + ATP = O-phospho-L-homoserine + ADP + H(+). It participates in amino-acid biosynthesis; L-threonine biosynthesis; L-threonine from L-aspartate: step 4/5. In terms of biological role, catalyzes the ATP-dependent phosphorylation of L-homoserine to L-homoserine phosphate. This chain is Homoserine kinase, found in Prochlorococcus marinus (strain MIT 9215).